Here is a 429-residue protein sequence, read N- to C-terminus: Adenylosuccinate synthetase (429 aa).

GTP contacts are provided by residues 12–18 and 40–42; these read GDEGKGK and GHT. Asp-13 functions as the Proton acceptor in the catalytic mechanism. Residues Asp-13 and Gly-40 each contribute to the Mg(2+) site. Residues 13-16, 38-41, Thr-128, Arg-142, Gln-223, Thr-238, and Arg-302 each bind IMP; these read DEGK and NAGH. His-41 (proton donor) is an active-site residue. Substrate is bound at residue 298 to 304; sequence TTTGRPR. Residues Arg-304, 330 to 332, and 412 to 414 each bind GTP; these read SID and SVG.

It belongs to the adenylosuccinate synthetase family. In terms of assembly, homodimer. It depends on Mg(2+) as a cofactor.

It is found in the cytoplasm. The catalysed reaction is IMP + L-aspartate + GTP = N(6)-(1,2-dicarboxyethyl)-AMP + GDP + phosphate + 2 H(+). It participates in purine metabolism; AMP biosynthesis via de novo pathway; AMP from IMP: step 1/2. Its function is as follows. Plays an important role in the de novo pathway of purine nucleotide biosynthesis. Catalyzes the first committed step in the biosynthesis of AMP from IMP. The chain is Adenylosuccinate synthetase from Bacillus cytotoxicus (strain DSM 22905 / CIP 110041 / 391-98 / NVH 391-98).